Consider the following 448-residue polypeptide: Phosphoglucosamine mutase (448 aa).

Ser-100 acts as the Phosphoserine intermediate in catalysis. Ser-100, Asp-240, Asp-242, and Asp-244 together coordinate Mg(2+). The residue at position 100 (Ser-100) is a Phosphoserine.

It belongs to the phosphohexose mutase family. The cofactor is Mg(2+). Activated by phosphorylation.

It catalyses the reaction alpha-D-glucosamine 1-phosphate = D-glucosamine 6-phosphate. Its function is as follows. Catalyzes the conversion of glucosamine-6-phosphate to glucosamine-1-phosphate. This Alkaliphilus metalliredigens (strain QYMF) protein is Phosphoglucosamine mutase.